The following is a 428-amino-acid chain: Serine--tRNA ligase (428 aa).

Residue 231–233 (TSE) participates in L-serine binding. ATP is bound by residues 262-264 (RRE) and V278. E285 lines the L-serine pocket. 349 to 352 (ELTS) provides a ligand contact to ATP. T384 is an L-serine binding site.

Belongs to the class-II aminoacyl-tRNA synthetase family. Type-1 seryl-tRNA synthetase subfamily. As to quaternary structure, homodimer. The tRNA molecule binds across the dimer.

Its subcellular location is the cytoplasm. It carries out the reaction tRNA(Ser) + L-serine + ATP = L-seryl-tRNA(Ser) + AMP + diphosphate + H(+). It catalyses the reaction tRNA(Sec) + L-serine + ATP = L-seryl-tRNA(Sec) + AMP + diphosphate + H(+). The protein operates within aminoacyl-tRNA biosynthesis; selenocysteinyl-tRNA(Sec) biosynthesis; L-seryl-tRNA(Sec) from L-serine and tRNA(Sec): step 1/1. Functionally, catalyzes the attachment of serine to tRNA(Ser). Is also able to aminoacylate tRNA(Sec) with serine, to form the misacylated tRNA L-seryl-tRNA(Sec), which will be further converted into selenocysteinyl-tRNA(Sec). This chain is Serine--tRNA ligase, found in Bifidobacterium adolescentis (strain ATCC 15703 / DSM 20083 / NCTC 11814 / E194a).